The sequence spans 86 residues: DNA-directed RNA polymerase subunit Rpo11 (86 aa).

This sequence belongs to the archaeal Rpo11/eukaryotic RPB11/RPC19 RNA polymerase subunit family. As to quaternary structure, part of the RNA polymerase complex.

The protein localises to the cytoplasm. The catalysed reaction is RNA(n) + a ribonucleoside 5'-triphosphate = RNA(n+1) + diphosphate. Functionally, DNA-dependent RNA polymerase (RNAP) catalyzes the transcription of DNA into RNA using the four ribonucleoside triphosphates as substrates. This is DNA-directed RNA polymerase subunit Rpo11 from Archaeoglobus fulgidus (strain ATCC 49558 / DSM 4304 / JCM 9628 / NBRC 100126 / VC-16).